A 365-amino-acid polypeptide reads, in one-letter code: 3-dehydroquinate synthase (365 aa).

Residues 106-110 (GVIGD), 130-131 (TT), Lys142, Lys151, and 169-172 (FFAT) each bind NAD(+). Residues Glu184, His247, and His264 each coordinate Zn(2+).

The protein belongs to the sugar phosphate cyclases superfamily. Dehydroquinate synthase family. Co(2+) serves as cofactor. Requires Zn(2+) as cofactor. NAD(+) is required as a cofactor.

It localises to the cytoplasm. It catalyses the reaction 7-phospho-2-dehydro-3-deoxy-D-arabino-heptonate = 3-dehydroquinate + phosphate. It participates in metabolic intermediate biosynthesis; chorismate biosynthesis; chorismate from D-erythrose 4-phosphate and phosphoenolpyruvate: step 2/7. In terms of biological role, catalyzes the conversion of 3-deoxy-D-arabino-heptulosonate 7-phosphate (DAHP) to dehydroquinate (DHQ). In Listeria monocytogenes serotype 4a (strain HCC23), this protein is 3-dehydroquinate synthase.